Here is a 407-residue protein sequence, read N- to C-terminus: Transcriptional regulator UL34 (407 aa).

Residues Ala268–Phe330 form a disordered region. Residues Glu273 to Asp286 show a composition bias toward acidic residues. Residues Glu287 to Lys301 show a composition bias toward basic and acidic residues. Over residues Pro302–Val312 the composition is skewed to basic residues.

The protein belongs to the HHV-5 UL34 protein family.

The protein resides in the host nucleus. Its function is as follows. Acts as a transcriptional repressor of the US3 gene expression through a specific DNA sequence named the transcriptional repressive element (tre). This Homo sapiens (Human) protein is Transcriptional regulator UL34 (UL34).